A 121-amino-acid polypeptide reads, in one-letter code: Small ribosomal subunit protein uS13 (121 aa).

The interval 91–121 (HRRGLPVRGQNSKNNARTRKGPRRTVANKKK) is disordered. A compositionally biased stretch (basic residues) spans 106 to 121 (ARTRKGPRRTVANKKK).

The protein belongs to the universal ribosomal protein uS13 family. Part of the 30S ribosomal subunit. Forms a loose heterodimer with protein S19. Forms two bridges to the 50S subunit in the 70S ribosome.

In terms of biological role, located at the top of the head of the 30S subunit, it contacts several helices of the 16S rRNA. In the 70S ribosome it contacts the 23S rRNA (bridge B1a) and protein L5 of the 50S subunit (bridge B1b), connecting the 2 subunits; these bridges are implicated in subunit movement. Contacts the tRNAs in the A and P-sites. The sequence is that of Small ribosomal subunit protein uS13 from Bacillus cereus (strain AH187).